The sequence spans 373 residues: Dual-specificity RNA methyltransferase RlmN (373 aa).

Catalysis depends on Glu94, which acts as the Proton acceptor. The Radical SAM core domain occupies 100-339; sequence EDDRATLCVS…VIVRKTRGDD (240 aa). A disulfide bridge connects residues Cys107 and Cys344. [4Fe-4S] cluster is bound by residues Cys114, Cys118, and Cys121. Residues 168-169, Ser200, 222-224, and Asn301 contribute to the S-adenosyl-L-methionine site; these read GE and SIH. The active-site S-methylcysteine intermediate is the Cys344.

This sequence belongs to the radical SAM superfamily. RlmN family. Requires [4Fe-4S] cluster as cofactor.

The protein localises to the cytoplasm. It catalyses the reaction adenosine(2503) in 23S rRNA + 2 reduced [2Fe-2S]-[ferredoxin] + 2 S-adenosyl-L-methionine = 2-methyladenosine(2503) in 23S rRNA + 5'-deoxyadenosine + L-methionine + 2 oxidized [2Fe-2S]-[ferredoxin] + S-adenosyl-L-homocysteine. The enzyme catalyses adenosine(37) in tRNA + 2 reduced [2Fe-2S]-[ferredoxin] + 2 S-adenosyl-L-methionine = 2-methyladenosine(37) in tRNA + 5'-deoxyadenosine + L-methionine + 2 oxidized [2Fe-2S]-[ferredoxin] + S-adenosyl-L-homocysteine. Functionally, specifically methylates position 2 of adenine 2503 in 23S rRNA and position 2 of adenine 37 in tRNAs. m2A2503 modification seems to play a crucial role in the proofreading step occurring at the peptidyl transferase center and thus would serve to optimize ribosomal fidelity. This is Dual-specificity RNA methyltransferase RlmN from Shewanella putrefaciens (strain CN-32 / ATCC BAA-453).